Reading from the N-terminus, the 440-residue chain is Thymidine phosphorylase (440 aa).

It belongs to the thymidine/pyrimidine-nucleoside phosphorylase family. Homodimer.

The enzyme catalyses thymidine + phosphate = 2-deoxy-alpha-D-ribose 1-phosphate + thymine. Its pathway is pyrimidine metabolism; dTMP biosynthesis via salvage pathway; dTMP from thymine: step 1/2. The enzymes which catalyze the reversible phosphorolysis of pyrimidine nucleosides are involved in the degradation of these compounds and in their utilization as carbon and energy sources, or in the rescue of pyrimidine bases for nucleotide synthesis. The chain is Thymidine phosphorylase from Serratia proteamaculans (strain 568).